Reading from the N-terminus, the 272-residue chain is MAEVRWIYDLTIFLYAASVLFYFNDFLQSNRKVNRLAFGLLVVVWALQTAFFVSQAVMKGYFPVITLFETLFFYSWVLVGLSLAIHYFFRIDLLVFLPNIIGFVVLVMSMFLPETPIEAVSSILTSELLLTHVTLAMFSYGAFSLSMIFSAMYLLQHKMLKGRRWSPLLRRLPSLDQLEGYAYRMNMLGVPMLLLSIVLGIIWGKMVLGEKFLLDSKVLLSELVLAIYSLWLYQRYRIRCRCADSSQWNVLAFLLLLINFLGFTTSTFHDWW.

8 helical membrane-spanning segments follow: residues 7-27 (IYDL…NDFL), 38-58 (FGLL…QAVM), 65-85 (ITLF…SLAI), 93-113 (LLVF…MFLP), 135-155 (LAMF…MYLL), 188-208 (LGVP…KMVL), 212-232 (FLLD…SLWL), and 248-268 (WNVL…TSTF).

It localises to the cell membrane. Required for HemL synthesis. The protein is Protein HemX (hemX) of Brevibacillus brevis (Bacillus brevis).